The sequence spans 860 residues: Protein argonaute-3 (860 aa).

The PAZ domain occupies 230–349 (PVIQFMCEVL…LPLEVCNIVA (120 aa)). Residues 518 to 819 (LIIVILPGKT…VAFRARYHLV (302 aa)) enclose the Piwi domain. The segment at 530-567 (YAEVKRVGDTLLGMATQCVQVKNVVKTSPQTLSNLCLK) is interaction with guide RNA. A divalent metal cation-binding residues include aspartate 598, glutamate 638, and aspartate 670. The tract at residues 758–805 (QGTSRPSHYYVLWDDNCFTADEFQLLTYQLCHTYVRCTRSVSIPAPAY) is interaction with guide RNA. Residue histidine 808 coordinates a divalent metal cation.

Belongs to the argonaute family. Ago subfamily.

The protein resides in the cytoplasm. It is found in the P-body. The enzyme catalyses Endonucleolytic cleavage to 5'-phosphomonoester.. Required for RNA-mediated gene silencing (RNAi). Binds to short RNAs such as microRNAs (miRNAs) and represses the translation of mRNAs which are complementary to them. Possesses RNA slicer activity but only on select RNAs bearing 5'- and 3'-flanking sequences to the region of guide-target complementarity. In Danio rerio (Zebrafish), this protein is Protein argonaute-3 (ago3).